A 410-amino-acid polypeptide reads, in one-letter code: D-amino acid dehydrogenase (410 aa).

Glycine 9–glycine 14 serves as a coordination point for FAD.

It belongs to the DadA oxidoreductase family. The cofactor is FAD.

It localises to the cell inner membrane. It catalyses the reaction a D-alpha-amino acid + a quinone + H2O = a 2-oxocarboxylate + a quinol + NH4(+). Its activity is regulated as follows. Activity is markedly inhibited by benzoate, and moderately by SH reagents such as p-hydroxymercuribenzoate, iodoacetamide, and iodoacetate. Functionally, catalyzes the oxidative deamination of D-amino acids. Has broad substrate specificity; is mostly active on D-proline, and to a lesser extent, on several other D-amino acids such as D-alanine, D-phenylalanine and D-serine. Mediates electron transport from D-proline to coenzyme Q1 in vitro, and is involved in the electron transport chain from D-proline to the c-type cytochrome in vivo. This chain is D-amino acid dehydrogenase, found in Helicobacter pylori (Campylobacter pylori).